Consider the following 221-residue polypeptide: Adenylate kinase (221 aa).

10 to 15 lines the ATP pocket; it reads GAGKGT. Residues 30–59 are NMP; the sequence is STGDIFRQNLRDNTELGKLAKEYMDKGLLV. AMP contacts are provided by residues T31, R36, 57–59, 85–88, and Q92; these read LLV and GYPR. An LID region spans residues 126–163; that stretch reads GRRVCPVCGATYHIKTSPPKVDNVCDKCGSELIQRSDD. R127 lines the ATP pocket. The Zn(2+) site is built by C130 and C133. 136–137 lines the ATP pocket; the sequence is TY. Zn(2+)-binding residues include C150 and C153. AMP is bound by residues R160 and R171. K199 is a binding site for ATP.

Belongs to the adenylate kinase family. As to quaternary structure, monomer.

Its subcellular location is the cytoplasm. The catalysed reaction is AMP + ATP = 2 ADP. It functions in the pathway purine metabolism; AMP biosynthesis via salvage pathway; AMP from ADP: step 1/1. Functionally, catalyzes the reversible transfer of the terminal phosphate group between ATP and AMP. Plays an important role in cellular energy homeostasis and in adenine nucleotide metabolism. The sequence is that of Adenylate kinase from Caldanaerobacter subterraneus subsp. tengcongensis (strain DSM 15242 / JCM 11007 / NBRC 100824 / MB4) (Thermoanaerobacter tengcongensis).